The sequence spans 152 residues: Interleukin-1 family member 10 (152 aa).

This sequence belongs to the IL-1 family. As to quaternary structure, interacts with cargo receptor TMED10; the interaction mediates the translocation from the cytoplasm into the ERGIC (endoplasmic reticulum-Golgi intermediate compartment) and thereby secretion.

It localises to the cytoplasm. Its subcellular location is the endoplasmic reticulum-Golgi intermediate compartment. The protein resides in the secreted. Its function is as follows. Cytokine with immunomodulatory activity. Alone, does not induce cytokine production, but reduces IL22 and IL17A production by T-cells in response to heat-killed Candida albicans. Reduces IL36G-induced production of IL8 by peripheral blood mononuclear cells. Increases IL6 production by dendritic cells stimulated by bacterial lipopolysaccharides (LPS). Ligand for IL-36R/IL1RL2. This is Interleukin-1 family member 10 (Il1f10) from Mus musculus (Mouse).